We begin with the raw amino-acid sequence, 623 residues long: MNDLKFDPNVKLILASARSHAMSLSHGQVTPLHLGVTLISDLTSVFYRAITSAGDGDISAQSVVNVINQSLYKLTKRNLGDTKVGVAVLVISLLEDSQISDVLKEAGVVPEKVKSEVEKLRGEVILRALKTYGTDLVEQAGKLDPVIGRHREIRRVIEVLSRRTKNNPVLIGEPGVGKTAVVEGLAQRILKGDVPINLTGVKLISLEFGAMVAGTTLRGQFEERLKSVLKAVEEAQGKVVLFIDEIHMALGACKASGSTDAAKLLKPMLARGQLRFIGATTLEEYRTHVEKDAAFERRFQQVFVAEPSVPDTISILRGLKEKYEGHHGVRIQDRALVLSAQLSERYITGRRLPDKAIDLVDESCAHVKAQLDIQPEEIDSLERKVMQLEIEIHALEKEKDDKASEARLSEVRKELDDLRDKLEPLTIKYKKEKKIINETRRLKQNRDDLMIALQEAERQHDVPKAAVLKYGAIQEVESAIAKLEKSAKDNVMLTETVGPENIAEVVSRWTGIPVTRLDQNEKKRLISLADKLHERVVGQDEAVKAVAAAILRSRVGLGRPQQPSGSFLFLGPTGVGKTELAKALAEQLFDSENLLVRLDMSEYNDKFSVNKLIGAPPGYVHWS.

One can recognise a Clp R domain in the interval 1–123 (MNDLKFDPNV…KSEVEKLRGE (123 aa)). Repeat stretches follow at residues 6-71 (FDPN…NQSL) and 77-123 (RNLG…LRGE). Positions 129 to 375 (LKTYGTDLVE…HVKAQLDIQP (247 aa)) are i. Position 172–179 (172–179 (GEPGVGKT)) interacts with ATP. Residues 368-462 (KAQLDIQPEE…LQEAERQHDV (95 aa)) adopt a coiled-coil conformation. 571–578 (GPTGVGKT) lines the ATP pocket.

Belongs to the ClpA/ClpB family.

In Arabidopsis thaliana (Mouse-ear cress), this protein is Putative chaperone protein ClpB2, chloroplastic (CLPB2).